The chain runs to 649 residues: Protein WHI4 (649 aa).

A phosphoserine mark is found at serine 22 and serine 206. Disordered stretches follow at residues 196 to 217 (EHVS…SSAQ) and 228 to 247 (ISYG…KPRP). Over residues 228–238 (ISYGKTSSSPL) the composition is skewed to polar residues. Residues serine 258 and serine 283 each carry the phosphoserine modification. Disordered stretches follow at residues 438–461 (LDLN…SIFN) and 604–649 (QLPH…YGKS). The region spanning 533 to 625 (NTLYVGNLPP…GGIRLSFSKN (93 aa)) is the RRM domain. The segment covering 631-649 (GSNSRSKSGYSFNGSYGKS) has biased composition (polar residues).

In terms of processing, phosphorylated by PKA in vitro.

It is found in the cytoplasm. Its function is as follows. Has a partially redundant function to WHI3, a dosage-dependent modulator of cell size. The chain is Protein WHI4 (WHI4) from Saccharomyces cerevisiae (strain ATCC 204508 / S288c) (Baker's yeast).